The sequence spans 109 residues: Cell division suppressor protein YneA (109 aa).

The LysM domain occupies 39-90 (SEVNVSEGDSLWALADQYAGKSDMAKADFVSWVEKENNLADGHVEAGESVVI).

The protein belongs to the YneA family.

The protein resides in the cytoplasm. In terms of biological role, inhibits cell division during the SOS response. Affects a later stage of the cell division protein assembly, after the assembly of the Z ring, by probably suppressing recruitment of FtsL and/or DivIC to the division machinery. This chain is Cell division suppressor protein YneA, found in Listeria monocytogenes serotype 4b (strain F2365).